We begin with the raw amino-acid sequence, 482 residues long: tRNA sulfurtransferase (482 aa).

The 105-residue stretch at Pro61 to Arg165 folds into the THUMP domain. ATP-binding positions include Leu183–Ile184, Lys265, Gly287, and Gln296. An intrachain disulfide couples Cys344 to Cys456. In terms of domain architecture, Rhodanese spans Phe404–Pro482. Cys456 (cysteine persulfide intermediate) is an active-site residue.

Belongs to the ThiI family.

The protein localises to the cytoplasm. The enzyme catalyses [ThiI sulfur-carrier protein]-S-sulfanyl-L-cysteine + a uridine in tRNA + 2 reduced [2Fe-2S]-[ferredoxin] + ATP + H(+) = [ThiI sulfur-carrier protein]-L-cysteine + a 4-thiouridine in tRNA + 2 oxidized [2Fe-2S]-[ferredoxin] + AMP + diphosphate. The catalysed reaction is [ThiS sulfur-carrier protein]-C-terminal Gly-Gly-AMP + S-sulfanyl-L-cysteinyl-[cysteine desulfurase] + AH2 = [ThiS sulfur-carrier protein]-C-terminal-Gly-aminoethanethioate + L-cysteinyl-[cysteine desulfurase] + A + AMP + 2 H(+). It participates in cofactor biosynthesis; thiamine diphosphate biosynthesis. In terms of biological role, catalyzes the ATP-dependent transfer of a sulfur to tRNA to produce 4-thiouridine in position 8 of tRNAs, which functions as a near-UV photosensor. Also catalyzes the transfer of sulfur to the sulfur carrier protein ThiS, forming ThiS-thiocarboxylate. This is a step in the synthesis of thiazole, in the thiamine biosynthesis pathway. The sulfur is donated as persulfide by IscS. The sequence is that of tRNA sulfurtransferase from Serratia proteamaculans (strain 568).